Consider the following 338-residue polypeptide: Large ribosomal subunit protein uL3 (338 aa).

Residues 228-237 (HKHRKGHRRT) are compositionally biased toward basic residues. The disordered stretch occupies residues 228 to 255 (HKHRKGHRRTGTIGPQAPALMFTQPRPG).

This sequence belongs to the universal ribosomal protein uL3 family. Part of the 50S ribosomal subunit. Forms a cluster with proteins L14 and L24e.

In terms of biological role, one of the primary rRNA binding proteins, it binds directly near the 3'-end of the 23S rRNA, where it nucleates assembly of the 50S subunit. The chain is Large ribosomal subunit protein uL3 from Pyrobaculum calidifontis (strain DSM 21063 / JCM 11548 / VA1).